We begin with the raw amino-acid sequence, 182 residues long: Mid1-interacting protein 1 (182 aa).

M1 carries the post-translational modification N-acetylmethionine. The segment at 55–75 (VGGSGGCLEERTTPAPSPGSA) is disordered. Residues S71, S74, and S78 each carry the phosphoserine modification.

Belongs to the SPOT14 family. As to quaternary structure, homodimer in the absence of THRSP. Heterodimer with THRSP. The homodimer interacts with ACACA and ACACB. Promotes polymerization of Acetyl-CoA carboxylase to form complexes that contain MID1IP1 and ACACA and/or ACACB. Interaction with THRSP interferes with ACACA binding. In terms of tissue distribution, during embryonic development, expressed mainly in the neuroepithelial midline, urogenital apparatus and digits. Detected in adult white fat, liver, heart, brain and kidney. Expressed at very low levels in lactating mammary gland.

Its subcellular location is the nucleus. The protein localises to the cytoplasm. The protein resides in the cytoskeleton. In terms of biological role, plays a role in the regulation of lipogenesis in liver. Up-regulates ACACA enzyme activity. Required for efficient lipid biosynthesis, including triacylglycerol, diacylglycerol and phospholipid. Involved in stabilization of microtubules. The chain is Mid1-interacting protein 1 (Mid1ip1) from Mus musculus (Mouse).